A 933-amino-acid chain; its full sequence is C-1-tetrahydrofolate synthase, cytoplasmic (933 aa).

A methylenetetrahydrofolate dehydrogenase and cyclohydrolase region spans residues 1 to 303 (MWEPQGSLDP…DRLLAPTWPL (303 aa)). Residues 51-55 (YIRMK) and 98-100 (VQM) each bind substrate. NADP(+) is bound by residues 170–172 (GRS) and serine 195. 270–274 (PGGVG) serves as a coordination point for substrate. A formyltetrahydrofolate synthetase region spans residues 304-933 (RPLRITPLSP…TKTGEIEGLF (630 aa)). 378–385 (TPLGEGKS) serves as a coordination point for ATP.

This sequence in the N-terminal section; belongs to the tetrahydrofolate dehydrogenase/cyclohydrolase family. It in the C-terminal section; belongs to the formate--tetrahydrofolate ligase family. As to quaternary structure, homodimer.

It is found in the cytoplasm. The catalysed reaction is (6R)-5,10-methylene-5,6,7,8-tetrahydrofolate + NADP(+) = (6R)-5,10-methenyltetrahydrofolate + NADPH. It carries out the reaction (6R)-5,10-methenyltetrahydrofolate + H2O = (6R)-10-formyltetrahydrofolate + H(+). It catalyses the reaction (6S)-5,6,7,8-tetrahydrofolate + formate + ATP = (6R)-10-formyltetrahydrofolate + ADP + phosphate. It functions in the pathway one-carbon metabolism; tetrahydrofolate interconversion. The sequence is that of C-1-tetrahydrofolate synthase, cytoplasmic from Spodoptera frugiperda (Fall armyworm).